The following is a 467-amino-acid chain: ATP synthase subunit beta (467 aa).

153-160 (GGAGVGKT) serves as a coordination point for ATP.

The protein belongs to the ATPase alpha/beta chains family. F-type ATPases have 2 components, CF(1) - the catalytic core - and CF(0) - the membrane proton channel. CF(1) has five subunits: alpha(3), beta(3), gamma(1), delta(1), epsilon(1). CF(0) has three main subunits: a(1), b(2) and c(9-12). The alpha and beta chains form an alternating ring which encloses part of the gamma chain. CF(1) is attached to CF(0) by a central stalk formed by the gamma and epsilon chains, while a peripheral stalk is formed by the delta and b chains.

The protein localises to the cell membrane. It carries out the reaction ATP + H2O + 4 H(+)(in) = ADP + phosphate + 5 H(+)(out). Functionally, produces ATP from ADP in the presence of a proton gradient across the membrane. The catalytic sites are hosted primarily by the beta subunits. The sequence is that of ATP synthase subunit beta from Lactiplantibacillus plantarum (strain ATCC BAA-793 / NCIMB 8826 / WCFS1) (Lactobacillus plantarum).